We begin with the raw amino-acid sequence, 407 residues long: SERPINE1 mRNA-binding protein 1 (407 aa).

Ser25 is modified (phosphoserine). The interval 33-227 (AAENKKKEAG…GSGSHNWGTV (195 aa)) is disordered. Low complexity predominate over residues 51-68 (AKSAAQAAAQTNSNAAGK). The residue at position 52 (Lys52) is an N6-acetyllysine; alternate. Lys52 participates in a covalent cross-link: Glycyl lysine isopeptide (Lys-Gly) (interchain with G-Cter in SUMO1); alternate. Position 68 is an N6-acetyllysine (Lys68). 3 stretches are compositionally biased toward basic and acidic residues: residues 70 to 80 (LRKESQKDRKN), 89 to 114 (ADKK…RRPD), and 122 to 162 (KLID…ERPI). Residue Lys102 forms a Glycyl lysine isopeptide (Lys-Gly) (interchain with G-Cter in SUMO2) linkage. An N6-acetyllysine mark is found at Lys122 and Lys140. Over residues 164–182 (GRGGLGRGRGGRGRGMGRG) the composition is skewed to gly residues. 2 positions are modified to omega-N-methylarginine: Arg165 and Arg188. Over residues 183–199 (DGFDSRGKREFDRHSGS) the composition is skewed to basic and acidic residues. A phosphoserine mark is found at Ser197, Ser199, Ser203, Ser205, and Ser208. Position 211 is an N6-acetyllysine; alternate (Lys211). Lys211 is covalently cross-linked (Glycyl lysine isopeptide (Lys-Gly) (interchain with G-Cter in SUMO2); alternate). Residue Arg216 is modified to Omega-N-methylarginine. Ser221 carries the post-translational modification Phosphoserine. Residue Thr226 is modified to Phosphothreonine. Residue Lys228 forms a Glycyl lysine isopeptide (Lys-Gly) (interchain with G-Cter in SUMO1); alternate linkage. Residue Lys228 forms a Glycyl lysine isopeptide (Lys-Gly) (interchain with G-Cter in SUMO2); alternate linkage. Phosphoserine occurs at positions 231, 234, and 237. Ser234 carries the phosphothreonine modification. The residue at position 240 (Lys240) is a Phosphothreonine. Positions 242 to 256 (ISYNCSDLDQSNVTE) are enriched in polar residues. Disordered regions lie at residues 242–288 (ISYN…KEMT) and 327–407 (SKSE…PALA). A compositionally biased stretch (basic and acidic residues) spans 261–274 (GEEHPVADTENKEN). Lys280 is covalently cross-linked (Glycyl lysine isopeptide (Lys-Gly) (interchain with G-Cter in SUMO2)). Basic and acidic residues predominate over residues 327–341 (SKSEEAHAEDSVMDH). Position 328 is an N6-acetyllysine (Lys328). Residue Ser329 is modified to Phosphoserine. Gly residues predominate over residues 362-371 (GRPGRGGRGG). 3 positions are modified to omega-N-methylarginine: Arg363, Arg366, and Arg369. Phosphoserine is present on residues Ser391 and Ser393.

This sequence belongs to the SERBP1-HABP4 family. In terms of assembly, associates with mature 80S ribosomes. Interacts with EEF2/eEF2; interaction sequesters EEF2/eEF2 at the A-site of the ribosome, thereby blocking the interaction sites of the mRNA-tRNA complex, promoting ribosome stabilization and hibernation. Interacts with SPIN1. Interacts with CHD3 and TDRD3. Interacts with ZDHHC17 (via ANK repeats). In terms of processing, phosphorylation by MTOR inhibits SERBP1 and relieves ribosome hibernation.

Its subcellular location is the cytoplasm. It localises to the nucleus. It is found in the perinuclear region. In terms of biological role, ribosome-binding protein that promotes ribosome hibernation, a process during which ribosomes are stabilized in an inactive state and preserved from proteasomal degradation. Acts via its association with EEF2/eEF2 factor, sequestering EEF2/eEF2 at the A-site of the ribosome and promoting ribosome stabilization and storage in an inactive state. May also play a role in the regulation of mRNA stability: binds to the 3'-most 134 nt of the SERPINE1/PAI1 mRNA, a region which confers cyclic nucleotide regulation of message decay. Seems to play a role in PML-nuclear bodies formation. The chain is SERPINE1 mRNA-binding protein 1 from Mus musculus (Mouse).